The chain runs to 1234 residues: 1-phosphatidylinositol 4,5-bisphosphate phosphodiesterase beta-3 (1234 aa).

An N-acetylalanine modification is found at Ala2. The PI-PLC X-box domain maps to 318 to 468; it reads DMTQPLSAYF…LMGRILVKNK (151 aa). Residues His332 and His379 contribute to the active site. Residues 467–587 are disordered; that stretch reads NKKRHRPSAG…GTASSEVNAT (121 aa). Residues Ser474, Ser490, Ser495, and Ser537 each carry the phosphoserine modification. The segment covering 488–515 has biased composition (low complexity); the sequence is EQSNSALSESSAATEPSSPQLGSPSSDS. A compositionally biased stretch (acidic residues) spans 555–567; that stretch reads REDEEEDEEEEEQ. Residues 576–587 show a composition bias toward polar residues; it reads DEGTASSEVNAT. The region spanning 590 to 706 is the PI-PLC Y-box domain; that stretch reads MSTLVNYIEP…GYLLKPEFMR (117 aa). Residues 707-835 enclose the C2 domain; sequence RPDKSFDPFT…RNEANQPLCL (129 aa). The segment covering 887–908 has biased composition (polar residues); the sequence is AGQETCQDTQSQQLGSQPSSNP. Residues 887–937 form a disordered region; it reads AGQETCQDTQSQQLGSQPSSNPTPSPLDASPRRPPGPTTSPASTSLSSPGQ. Positions 925-936 are enriched in low complexity; it reads TSPASTSLSSPG. A phosphoserine mark is found at Ser926 and Ser1105. Residues 1198–1234 form a disordered region; that stretch reads GLGDGPLVACASNGHAPGSSGHLSGADSESQEENTQL. The tract at residues 1231 to 1234 is interaction with SHANK2; sequence NTQL.

As to quaternary structure, interacts with SHANK2. Interacts with LPAR2. Ca(2+) is required as a cofactor.

It is found in the cytoplasm. Its subcellular location is the membrane. The protein resides in the nucleus. The enzyme catalyses a 1,2-diacyl-sn-glycero-3-phospho-(1D-myo-inositol-4,5-bisphosphate) + H2O = 1D-myo-inositol 1,4,5-trisphosphate + a 1,2-diacyl-sn-glycerol + H(+). It carries out the reaction a 1,2-diacyl-sn-glycero-3-phospho-(1D-myo-inositol) + H2O = 1D-myo-inositol 1-phosphate + a 1,2-diacyl-sn-glycerol + H(+). With respect to regulation, activated by G(q)/G(11) G alpha proteins in response to ligand-binding to G protein-coupled receptors. Functionally, catalyzes the production of the second messenger molecules diacylglycerol (DAG) and inositol 1,4,5-trisphosphate (IP3). Key transducer of G protein-coupled receptor signaling: activated by G(q)/G(11) G alpha proteins downstream of G protein-coupled receptors activation. In neutrophils, participates in a phospholipase C-activating N-formyl peptide-activated GPCR (G protein-coupled receptor) signaling pathway by promoting RASGRP4 activation by DAG, to promote neutrophil functional responses. The chain is 1-phosphatidylinositol 4,5-bisphosphate phosphodiesterase beta-3 from Homo sapiens (Human).